Here is a 249-residue protein sequence, read N- to C-terminus: Ubiquinone biosynthesis protein COQ4 homolog, mitochondrial (249 aa).

Residues His134, Asp135, His138, and Glu150 each contribute to the Zn(2+) site.

The protein belongs to the COQ4 family. Component of a multi-subunit COQ enzyme complex. The cofactor is Zn(2+).

It is found in the mitochondrion inner membrane. The catalysed reaction is a 4-hydroxy-3-methoxy-5-(all-trans-polyprenyl)benzoate + H(+) = a 2-methoxy-6-(all-trans-polyprenyl)phenol + CO2. It participates in cofactor biosynthesis; ubiquinone biosynthesis. Lyase that catalyzes the C1-decarboxylation of 4-hydroxy-3-methoxy-5-(all-trans-polyprenyl)benzoic acid into 2-methoxy-6-(all-trans-polyprenyl)phenol during ubiquinone biosynthesis. The protein is Ubiquinone biosynthesis protein COQ4 homolog, mitochondrial of Trypanosoma brucei brucei (strain 927/4 GUTat10.1).